Reading from the N-terminus, the 465-residue chain is 23S rRNA (uracil(1939)-C(5))-methyltransferase RlmD (465 aa).

Residues 1–24 (MSEAVPLSTRRASSAGDAPGRAPV) form a disordered region. Residues 16–80 (GDAPGRAPVL…PTYEQAQVVD (65 aa)) form the TRAM domain. Residues cysteine 93, cysteine 99, cysteine 102, and cysteine 181 each contribute to the [4Fe-4S] cluster site. 6 residues coordinate S-adenosyl-L-methionine: glutamine 289, phenylalanine 318, asparagine 323, glutamate 339, asparagine 367, and aspartate 388. Catalysis depends on cysteine 421, which acts as the Nucleophile.

Belongs to the class I-like SAM-binding methyltransferase superfamily. RNA M5U methyltransferase family. RlmD subfamily.

It catalyses the reaction uridine(1939) in 23S rRNA + S-adenosyl-L-methionine = 5-methyluridine(1939) in 23S rRNA + S-adenosyl-L-homocysteine + H(+). Catalyzes the formation of 5-methyl-uridine at position 1939 (m5U1939) in 23S rRNA. The polypeptide is 23S rRNA (uracil(1939)-C(5))-methyltransferase RlmD (Burkholderia mallei (strain ATCC 23344)).